The sequence spans 347 residues: MTEQKRPLTYRDAGVDIDAGNELVKRIAPVAKRTRRPEVLGGLGGFGALCELPTKYKNPVLVAGTDGVGTKLRLAIDHNRHEKVGVDLVAMCVNDLIVGGAEPLFFLDYYATGKLDVEIATSVVTGIGEGCELAGCALIGGETAEMPGMYEGEDYDLAGFCVGVVEKDGVLDGSKVEAGDKLIGLGASGPHSNGYSLIRRIMAQAETDIDLDGKPLIEHLLEPTRIYVKSLLKLIEQVPVHAMAHITGGGLPENLPRVLPDNTRAVIDTKSWEFPAVFQWLQQEGQVPAFEMYRTFNCGVGMVIAVPASHVDDALALLEAEGESAFLIGEIQAGDGQPDVVLDGLSA.

Belongs to the AIR synthase family.

It is found in the cytoplasm. It catalyses the reaction 2-formamido-N(1)-(5-O-phospho-beta-D-ribosyl)acetamidine + ATP = 5-amino-1-(5-phospho-beta-D-ribosyl)imidazole + ADP + phosphate + H(+). It functions in the pathway purine metabolism; IMP biosynthesis via de novo pathway; 5-amino-1-(5-phospho-D-ribosyl)imidazole from N(2)-formyl-N(1)-(5-phospho-D-ribosyl)glycinamide: step 2/2. The polypeptide is Phosphoribosylformylglycinamidine cyclo-ligase (Alcanivorax borkumensis (strain ATCC 700651 / DSM 11573 / NCIMB 13689 / SK2)).